Reading from the N-terminus, the 543-residue chain is MKRTRRSLPANFDPVYPYDAPKPSTQPPFFNDRKGLTESSPGTLAVNISPPLTFSNLGAIKLSTGAGLILKEGKLEANIGPGLTTNQEGQITVEKDSDGLTFTSPLHKIENTVSLSIGEGLEDESGTLKVNFPSPPPPLLFSPPLAEAGGTVSLPLQESMQVTEGKLGVKPTTYSPPLQKTDQQVSLRVGPGLTVLNGQLQAVQPPATTYKEPLLETENSVSLKVGAGLAVQDGALVATPPNVTFSAPLEKNGNAVSVRVGAGLSIQGNALVATTSPTLTFAYPLIKNNNHITLSAGSGLRVSGGSLTVATGPGLSHINGTIAAVIGAGLKFENNAILAKLGNGLTIRDGAIEAVAPQPSFTPVTLWTGPDPNVNASINGTPVIRSFISLTRDSNLVTVNASFTGEGSYQSVSPTQSQFSLILEFNQFGQLMSTGNLNSTTTWGEKPWGNNTVQVQPSHTWKLCMPNREVYSTPAATLTSCGLNSIAHDGAPNRSIDCMLIINKLRGAATYTLTFRFLNFNKLSSSTVFKTDVLTFTYVGENQ.

A disordered region spans residues 1 to 36; it reads MKRTRRSLPANFDPVYPYDAPKPSTQPPFFNDRKGL.

The protein belongs to the adenoviridae fiber family. Homotrimer. Interacts (via N-terminal tail region) with pentons.

It is found in the virion. Its subcellular location is the host nucleus. In terms of biological role, forms spikes that protrude from each vertex of the icosahedral capsid. Interacts with host receptor to provide virion initial attachment to target cell. Fiber proteins are shed during virus entry, when virus is still at the cell surface. The polypeptide is Fiber protein (Canine adenovirus serotype 1 (strain CLL) (CAdV-1)).